The chain runs to 142 residues: Large ribosomal subunit protein uL11 (142 aa).

Belongs to the universal ribosomal protein uL11 family. In terms of assembly, part of the ribosomal stalk of the 50S ribosomal subunit. Interacts with L10 and the large rRNA to form the base of the stalk. L10 forms an elongated spine to which L12 dimers bind in a sequential fashion forming a multimeric L10(L12)X complex. In terms of processing, one or more lysine residues are methylated.

Functionally, forms part of the ribosomal stalk which helps the ribosome interact with GTP-bound translation factors. This chain is Large ribosomal subunit protein uL11, found in Proteus vulgaris.